The sequence spans 613 residues: Dihydroxy-acid dehydratase (613 aa).

Aspartate 81 provides a ligand contact to Mg(2+). Position 122 (cysteine 122) interacts with [2Fe-2S] cluster. Residues aspartate 123 and lysine 124 each coordinate Mg(2+). N6-carboxylysine is present on lysine 124. Cysteine 193 lines the [2Fe-2S] cluster pocket. Glutamate 489 contributes to the Mg(2+) binding site. Catalysis depends on serine 515, which acts as the Proton acceptor.

It belongs to the IlvD/Edd family. As to quaternary structure, homodimer. The cofactor is [2Fe-2S] cluster. Mg(2+) is required as a cofactor.

The catalysed reaction is (2R)-2,3-dihydroxy-3-methylbutanoate = 3-methyl-2-oxobutanoate + H2O. It carries out the reaction (2R,3R)-2,3-dihydroxy-3-methylpentanoate = (S)-3-methyl-2-oxopentanoate + H2O. It participates in amino-acid biosynthesis; L-isoleucine biosynthesis; L-isoleucine from 2-oxobutanoate: step 3/4. Its pathway is amino-acid biosynthesis; L-valine biosynthesis; L-valine from pyruvate: step 3/4. Its function is as follows. Functions in the biosynthesis of branched-chain amino acids. Catalyzes the dehydration of (2R,3R)-2,3-dihydroxy-3-methylpentanoate (2,3-dihydroxy-3-methylvalerate) into 2-oxo-3-methylpentanoate (2-oxo-3-methylvalerate) and of (2R)-2,3-dihydroxy-3-methylbutanoate (2,3-dihydroxyisovalerate) into 2-oxo-3-methylbutanoate (2-oxoisovalerate), the penultimate precursor to L-isoleucine and L-valine, respectively. This chain is Dihydroxy-acid dehydratase, found in Pseudomonas fluorescens (strain SBW25).